The following is a 331-amino-acid chain: DNA double-strand break repair nuclease NurA (331 aa).

2 residues coordinate Mn(2+): aspartate 56 and aspartate 131.

The protein belongs to the NurA family. Homodimer. Interacts with SSB. It depends on Mn(2+) as a cofactor.

With respect to regulation, the 5'-3' ssDNA and dsDNA exonuclease and ssDNA endonuclease activities are inhibited by SSB (single-stranded DNA-binding protein). Its function is as follows. Involved in DNA double-strand break (DSB) repair. Probably acts with HerA to stimulate resection of the 5' strand and produce the long 3' single-strand that is required for RadA loading. Exhibits both single-stranded endonuclease activity and 5'-3' exonuclease activity on single-stranded and double-stranded DNA. In Sulfurisphaera tokodaii (strain DSM 16993 / JCM 10545 / NBRC 100140 / 7) (Sulfolobus tokodaii), this protein is DNA double-strand break repair nuclease NurA.